The following is a 636-amino-acid chain: Probable potassium transport system protein Kup (636 aa).

12 helical membrane passes run 23 to 43 (MALM…SPLY), 57 to 77 (PAHV…VVSL), 111 to 131 (WLLI…SMIT), 148 to 168 (HTLE…LFAI), 179 to 199 (LFGP…GYQI), 217 to 237 (FIAE…LALT), 258 to 278 (WFAM…ALLL), 287 to 307 (PFFL…ATVA), 348 to 368 (IYLP…VLLF), 377 to 397 (AYGF…FAVL), 409 to 429 (WMVL…ANIF), and 431 to 451 (IHEG…LMMT).

This sequence belongs to the HAK/KUP transporter (TC 2.A.72) family.

It localises to the cell inner membrane. It carries out the reaction K(+)(in) + H(+)(in) = K(+)(out) + H(+)(out). Its function is as follows. Transport of potassium into the cell. Likely operates as a K(+):H(+) symporter. In Bordetella bronchiseptica (strain ATCC BAA-588 / NCTC 13252 / RB50) (Alcaligenes bronchisepticus), this protein is Probable potassium transport system protein Kup.